The chain runs to 637 residues: Biosynthetic arginine decarboxylase (637 aa).

Lysine 101 carries the N6-(pyridoxal phosphate)lysine modification. 286–296 lines the substrate pocket; that stretch reads FDVGGGLAVDY.

This sequence belongs to the Orn/Lys/Arg decarboxylase class-II family. SpeA subfamily. It depends on Mg(2+) as a cofactor. Requires pyridoxal 5'-phosphate as cofactor.

The catalysed reaction is L-arginine + H(+) = agmatine + CO2. Its pathway is amine and polyamine biosynthesis; agmatine biosynthesis; agmatine from L-arginine: step 1/1. Its function is as follows. Catalyzes the biosynthesis of agmatine from arginine. This Shewanella loihica (strain ATCC BAA-1088 / PV-4) protein is Biosynthetic arginine decarboxylase.